The primary structure comprises 452 residues: RNA polymerase II-associated protein rba50 (452 aa).

3 disordered regions span residues 60–83 (LRKN…IDEE), 125–202 (EREL…QTKR), and 223–261 (PIKG…PLEF). The segment covering 125 to 135 (ERELAQRKDRS) has biased composition (basic and acidic residues). The segment covering 136–154 (SQVNTPDLSQRPSDDSFLS) has biased composition (polar residues). Over residues 156-165 (EKLRSSEKLN) the composition is skewed to basic and acidic residues. The span at 170-191 (SVLSSEAVDSSSGSPSPPMALS) shows a compositional bias: low complexity.

It belongs to the RPAP1 family. Interacts with RNA polymerase II.

The protein localises to the cytoplasm. Its subcellular location is the nucleus. Its function is as follows. Forms an interface between the RNA polymerase II enzyme and chaperone/scaffolding proteins, suggesting that it is required to connect RNA polymerase II to regulators of protein complex formation. In Schizosaccharomyces pombe (strain 972 / ATCC 24843) (Fission yeast), this protein is RNA polymerase II-associated protein rba50 (rba50).